A 165-amino-acid polypeptide reads, in one-letter code: Nucleotide-binding protein Ccur92_01650 (165 aa).

Belongs to the YajQ family.

Nucleotide-binding protein. The chain is Nucleotide-binding protein Ccur92_01650 from Campylobacter curvus (strain 525.92).